The primary structure comprises 63 residues: Large ribosomal subunit protein bL35 (63 aa).

Belongs to the bacterial ribosomal protein bL35 family.

The protein is Large ribosomal subunit protein bL35 of Campylobacter curvus (strain 525.92).